Here is a 747-residue protein sequence, read N- to C-terminus: Fibroblast growth factor receptor (747 aa).

The first 24 residues, 1–24 (MIQLQNTFIFIALTIFTSASTTSL), serve as a signal peptide directing secretion. The Extracellular segment spans residues 25 to 288 (KNETKPLNTI…TEEIPQDTHY (264 aa)). N-linked (GlcNAc...) asparagine glycans are attached at residues N26, N42, and N63. The interval 47 to 68 (EEDLFDTNGAPKSDTVNASTTT) is disordered. Ig-like C2-type domains follow at residues 74 to 167 (PRWV…YELD) and 175 to 267 (PPVL…AWLT). C99 and C151 are joined by a disulfide. 5 N-linked (GlcNAc...) asparagine glycosylation sites follow: N161, N185, N217, N227, and N240. A disulfide bridge connects residues C198 and C251. A helical membrane pass occupies residues 289–309 (LIYIFGVVCFIILLAFIVYMC). Over 310-747 (NSRYQNKDPP…NGHARMQSDV (438 aa)) the chain is Cytoplasmic. One can recognise a Protein kinase domain in the interval 377–660 (ILLHERIDEG…QLVEDLDRML (284 aa)). ATP is bound by residues 383–391 (IDEGFFGQV) and K412. Catalysis depends on D525, which acts as the Proton acceptor. Y556 carries the phosphotyrosine; by autocatalysis modification. The disordered stretch occupies residues 679–731 (YLPSDVDSNEDTESRDSANATGEDSDSVFEPIDGHGAHAYEVDEAGPLLNPQP). Basic and acidic residues predominate over residues 710 to 719 (IDGHGAHAYE).

This sequence belongs to the protein kinase superfamily. Tyr protein kinase family. Fibroblast growth factor receptor subfamily.

Its subcellular location is the membrane. The enzyme catalyses L-tyrosyl-[protein] + ATP = O-phospho-L-tyrosyl-[protein] + ADP + H(+). Functionally, receptor for basic fibroblast growth factor. The polypeptide is Fibroblast growth factor receptor (FGFR) (Ciona intestinalis (Transparent sea squirt)).